The primary structure comprises 279 residues: Large ribosomal subunit protein uL2 (279 aa).

Residues glycine 227–arginine 279 form a disordered region.

It belongs to the universal ribosomal protein uL2 family. Part of the 50S ribosomal subunit. Forms a bridge to the 30S subunit in the 70S ribosome.

In terms of biological role, one of the primary rRNA binding proteins. Required for association of the 30S and 50S subunits to form the 70S ribosome, for tRNA binding and peptide bond formation. It has been suggested to have peptidyltransferase activity; this is somewhat controversial. Makes several contacts with the 16S rRNA in the 70S ribosome. The sequence is that of Large ribosomal subunit protein uL2 from Neorickettsia sennetsu (strain ATCC VR-367 / Miyayama) (Ehrlichia sennetsu).